The sequence spans 132 residues: MSMSDPLGDMLTRIRNAISRKKSKVVTPASKLRARVLDVLKLEGYICGYNQIDSGNGKFEFEIELKYFENSSVIRTISRISKPGRRVYVSTKSILQVANGLGISILSTPKGVMTDHEAREQNVGGELLCRVF.

It belongs to the universal ribosomal protein uS8 family. Part of the 30S ribosomal subunit. Contacts proteins S5 and S12.

Its function is as follows. One of the primary rRNA binding proteins, it binds directly to 16S rRNA central domain where it helps coordinate assembly of the platform of the 30S subunit. The protein is Small ribosomal subunit protein uS8 of Bartonella bacilliformis (strain ATCC 35685 / KC583 / Herrer 020/F12,63).